A 549-amino-acid chain; its full sequence is Cation/acetate symporter ActP (549 aa).

Over 1-32 (MKRVLTALAATLPFAANAADAISGAVERQPTN) the chain is Periplasmic. A helical membrane pass occupies residues 33 to 55 (WQAIIMFLIFVVFTLGITYWASK). Residues 56–75 (RVRSRSDYYTAGGNITGFQN) are Cytoplasmic-facing. The chain crosses the membrane as a helical span at residues 76–98 (GLAIAGDYMSAASFLGISALVFT). The Periplasmic segment spans residues 99–102 (SGYD). Residues 103-125 (GLIYSLGFLVGWPIILFLIAERL) form a helical membrane-spanning segment. At 126–145 (RNLGRYTSADVASYRLKQGP) the chain is on the cytoplasmic side. Residues 146-168 (IRILSACGSLVVVALYLIAQMVG) traverse the membrane as a helical segment. The Periplasmic portion of the chain corresponds to 169 to 182 (AGKLIELLFGLNYH). Residues 183–205 (IAVVLVGVLMMMYVLFGGMLATT) form a helical membrane-spanning segment. Over 206–211 (WVQIIK) the chain is Cytoplasmic. A helical transmembrane segment spans residues 212–234 (AVLLLFGASFMAFMVMKHVGFSF). The Periplasmic portion of the chain corresponds to 235–260 (NNLFSEAMAVHPKGVDIMKPGGLVKD). A helical membrane pass occupies residues 261–283 (PISALSLGLGLMFGTAGLPHILM). Over 284-302 (RFFTVSDAREARKSVFYAT) the chain is Cytoplasmic. Residues 303-325 (GFMGYFYILTFIIGFGAIMLVGA) form a helical membrane-spanning segment. At 326 to 349 (NPEYKDAAGHLIGGNNMAAVHLAN) the chain is on the periplasmic side. A helical transmembrane segment spans residues 350-372 (AVGGNLFLGFISAVAFATILAVV). Residues 373 to 401 (ADLTLAGASAVSHDLYANVFKKGATEREE) lie on the Cytoplasmic side of the membrane. The chain crosses the membrane as a helical span at residues 402-424 (LRVSKITVLILGVIAIILGVLFE). Residues 425-427 (NQN) lie on the Periplasmic side of the membrane. Residues 428–450 (IAFMVGLAFAIAASCNFPIILLS) traverse the membrane as a helical segment. Topologically, residues 451–461 (MYWSKLTTRGA) are cytoplasmic. The helical transmembrane segment at 462–484 (MLGGWLGLITAVVLMILGPTIWV) threads the bilayer. Over 485–493 (QILGHEKAI) the chain is Periplasmic. The helical transmembrane segment at 494–516 (FPYEYPALFSISVAFLGIWFFSA) threads the bilayer. The Cytoplasmic segment spans residues 517 to 549 (TDNSAEGARERELFRAQFIRSQTGFGVEQGRAH).

The protein belongs to the sodium:solute symporter (SSF) (TC 2.A.21) family.

Its subcellular location is the cell inner membrane. Functionally, transports acetate. This chain is Cation/acetate symporter ActP (actP), found in Shigella flexneri.